Here is a 367-residue protein sequence, read N- to C-terminus: Putative S-adenosyl-L-methionine-dependent methyltransferase MT0751 (367 aa).

S-adenosyl-L-methionine-binding positions include D137 and 166–167 (DL). A compositionally biased stretch (polar residues) spans 348-358 (TRSDAHQASTT). The disordered stretch occupies residues 348–367 (TRSDAHQASTTAPPPPGLTG).

It belongs to the UPF0677 family.

In terms of biological role, exhibits S-adenosyl-L-methionine-dependent methyltransferase activity. The polypeptide is Putative S-adenosyl-L-methionine-dependent methyltransferase MT0751 (Mycobacterium tuberculosis (strain CDC 1551 / Oshkosh)).